Here is a 348-residue protein sequence, read N- to C-terminus: L-threonine 3-dehydrogenase (348 aa).

C38 provides a ligand contact to Zn(2+). Active-site charge relay system residues include T40 and H43. Residues H63, E64, C93, C96, C99, and C107 each coordinate Zn(2+). NAD(+) is bound by residues I175, D195, R200, 263 to 265 (LGI), and 287 to 288 (IY).

It belongs to the zinc-containing alcohol dehydrogenase family. In terms of assembly, homotetramer. Zn(2+) is required as a cofactor.

The protein localises to the cytoplasm. The catalysed reaction is L-threonine + NAD(+) = (2S)-2-amino-3-oxobutanoate + NADH + H(+). The protein operates within amino-acid degradation; L-threonine degradation via oxydo-reductase pathway; glycine from L-threonine: step 1/2. Functionally, catalyzes the NAD(+)-dependent oxidation of L-threonine to 2-amino-3-ketobutyrate. The sequence is that of L-threonine 3-dehydrogenase from Deinococcus radiodurans (strain ATCC 13939 / DSM 20539 / JCM 16871 / CCUG 27074 / LMG 4051 / NBRC 15346 / NCIMB 9279 / VKM B-1422 / R1).